A 136-amino-acid polypeptide reads, in one-letter code: UPF0225 protein Mpe_A2093 (136 aa).

This sequence belongs to the UPF0225 family.

This Methylibium petroleiphilum (strain ATCC BAA-1232 / LMG 22953 / PM1) protein is UPF0225 protein Mpe_A2093.